Consider the following 343-residue polypeptide: Sulfate/thiosulfate import ATP-binding protein CysA (343 aa).

In terms of domain architecture, ABC transporter spans 3-237 (IRISHLRKQF…PASPFVYSFV (235 aa)). 35-42 (GPSGSGKT) contributes to the ATP binding site.

The protein belongs to the ABC transporter superfamily. Sulfate/tungstate importer (TC 3.A.1.6) family. In terms of assembly, the complex is composed of two ATP-binding proteins (CysA), two transmembrane proteins (CysT and CysW) and a solute-binding protein (CysP).

It localises to the cell inner membrane. It catalyses the reaction sulfate(out) + ATP + H2O = sulfate(in) + ADP + phosphate + H(+). The catalysed reaction is thiosulfate(out) + ATP + H2O = thiosulfate(in) + ADP + phosphate + H(+). Its function is as follows. Part of the ABC transporter complex CysAWTP involved in sulfate/thiosulfate import. Responsible for energy coupling to the transport system. In Xanthomonas campestris pv. campestris (strain ATCC 33913 / DSM 3586 / NCPPB 528 / LMG 568 / P 25), this protein is Sulfate/thiosulfate import ATP-binding protein CysA.